The following is a 143-amino-acid chain: Transcriptional regulator MraZ (143 aa).

SpoVT-AbrB domains are found at residues 5–47 and 76–119; these read EYEH…TLEE and AIEV…DRET.

Belongs to the MraZ family. As to quaternary structure, forms oligomers.

It is found in the cytoplasm. The protein localises to the nucleoid. The protein is Transcriptional regulator MraZ of Staphylococcus haemolyticus (strain JCSC1435).